Here is a 533-residue protein sequence, read N- to C-terminus: Thromboxane-A synthase (533 aa).

Residues 1–10 lie on the Cytoplasmic side of the membrane; sequence MEVLGLLKFE. The chain crosses the membrane as a helical span at residues 11 to 31; it reads VSGTVVTVTLSVVLLALLKWY. Residues 32 to 75 lie on the Lumenal side of the membrane; that stretch reads STSAFSRLRKLGIRHPEPSPFVGNLMFFRQGFWESHLELRERYG. The helical transmembrane segment at 76–96 threads the bilayer; it reads PLCGYYLGRRMYIVISDPDMI. Topologically, residues 97–223 are cytoplasmic; the sequence is KEVLVENFSN…QRVFAFSTPR (127 aa). The chain crosses the membrane as a helical span at residues 224-244; it reads PLLALILSFPSIMVPLARILP. Topologically, residues 245-335 are lumenal; that stretch reads NKNRDELNGF…LTVDEIAGQA (91 aa). A helical transmembrane segment spans residues 336–356; the sequence is FLFLIAGHEITTNTLSFITYL. Topologically, residues 357–533 are cytoplasmic; that stretch reads LATHPECQER…NGVYVKIVSR (177 aa). C479 is a heme binding site.

Belongs to the cytochrome P450 family. As to quaternary structure, monomer. Heme is required as a cofactor. As to expression, expressed in bone marrow, spleen, lung, thymus, liver, uterus, and macrophages.

The protein localises to the endoplasmic reticulum membrane. The catalysed reaction is prostaglandin H2 = thromboxane A2. It carries out the reaction prostaglandin H2 = (12S)-hydroxy-(5Z,8E,10E)-heptadecatrienoate + malonaldehyde. The enzyme catalyses a hydroperoxyeicosatetraenoate = an oxoeicosatetraenoate + H2O. It catalyses the reaction (15S)-hydroperoxy-(5Z,8Z,11Z,13E)-eicosatetraenoate = 15-oxo-(5Z,8Z,11Z,13E)-eicosatetraenoate + H2O. The catalysed reaction is (15S)-hydroperoxy-(5Z,8Z,11Z,13E)-eicosatetraenoate + AH2 = (15S)-hydroxy-(5Z,8Z,11Z,13E)-eicosatetraenoate + A + H2O. Its function is as follows. Catalyzes the conversion of prostaglandin H2 (PGH2) to thromboxane A2 (TXA2), a potent inducer of blood vessel constriction and platelet aggregation. Also cleaves PGH2 to 12-hydroxy-heptadecatrienoicacid (12-HHT) and malondialdehyde, which is known to act as a mediator of DNA damage. 12-HHT and malondialdehyde are formed stoichiometrically in the same amounts as TXA2. Additionally, displays dehydratase activity, toward (15S)-hydroperoxy-(5Z,8Z,11Z,13E)-eicosatetraenoate (15(S)-HPETE) producing 15-KETE and 15-HETE. The chain is Thromboxane-A synthase (Tbxas1) from Rattus norvegicus (Rat).